A 508-amino-acid polypeptide reads, in one-letter code: Mevalonate kinase ERG12 (508 aa).

Positions 1–46 (MPPSNPAMVNGLNGSHANGNGNGHNHISDSGSETSGESSNGSGRRR) are disordered. A compositionally biased stretch (low complexity) spans 10–42 (NGLNGSHANGNGNGHNHISDSGSETSGESSNGS). ATP contacts are provided by residues K68, S200, and 205 to 211 (GAGLGSS). Mg(2+) is bound by residues S211 and E256. D267 (proton acceptor) is an active-site residue.

This sequence belongs to the GHMP kinase family. Mevalonate kinase subfamily. As to quaternary structure, homodimer. Requires Mg(2+) as cofactor.

The protein resides in the cytoplasm. It localises to the cytosol. The catalysed reaction is (R)-mevalonate + ATP = (R)-5-phosphomevalonate + ADP + H(+). Its pathway is isoprenoid biosynthesis; isopentenyl diphosphate biosynthesis via mevalonate pathway; isopentenyl diphosphate from (R)-mevalonate: step 1/3. Functionally, mevalonate kinase; part of the second module of ergosterol biosynthesis pathway that includes the middle steps of the pathway. ERG12 converts mevalonate into 5-phosphomevalonate. The second module is carried out in the vacuole and involves the formation of farnesyl diphosphate, which is also an important intermediate in the biosynthesis of ubiquinone, dolichol, heme and prenylated proteins. Activity by the mevalonate kinase ERG12 (FG05912) first converts mevalonate into 5-phosphomevalonate. 5-phosphomevalonate is then further converted to 5-diphosphomevalonate by the phosphomevalonate kinase ERG8 (FG09764). The diphosphomevalonate decarboxylase ERG19 (FG10424) then produces isopentenyl diphosphate. The isopentenyl-diphosphate delta-isomerase IDI1 (FG09722) then catalyzes the 1,3-allylic rearrangement of the homoallylic substrate isopentenyl (IPP) to its highly electrophilic allylic isomer, dimethylallyl diphosphate (DMAPP). Finally the farnesyl diphosphate synthase ERG20 (FG06784) catalyzes the sequential condensation of isopentenyl pyrophosphate with dimethylallyl pyrophosphate, and then with the resultant geranylpyrophosphate to the ultimate product farnesyl pyrophosphate. The chain is Mevalonate kinase ERG12 from Gibberella zeae (strain ATCC MYA-4620 / CBS 123657 / FGSC 9075 / NRRL 31084 / PH-1) (Wheat head blight fungus).